The sequence spans 148 residues: Sporulation inhibitor of replication protein SirA (148 aa).

Belongs to the SirA family. In terms of assembly, interacts with DnaA. Forms a 1:1 complex with domain I of DnaA.

The protein resides in the cytoplasm. Its function is as follows. Inhibits DNA replication initiation during sporulation, preventing overinitiation and thus enforcing diploidy; probably the main regulator of sporulation replication initiation under Spo0A control. During sporulation SirA prevents DnaA association with the replication origin to prevent excessive chromosome replication. Alternatively SirA binds to domain I of DnaA and prevent its interaction with DnaD, preventing DNA replication initiation. Upon ectopic expression during vegetative growth reduces chromosome copy number, leading to elongated cells with that can have a single nucleoid or be anucleate. Ectopic expression during vegetative growth blocks DnaA at oriC while blocking recruitment of DnaD to oriC. Plays a significant role during the onset of sporulation. The polypeptide is Sporulation inhibitor of replication protein SirA (Bacillus subtilis (strain 168)).